The following is a 1035-amino-acid chain: Condensin complex subunit 3 (1035 aa).

HEAT repeat units follow at residues 113–150 (RFVD…NIGE) and 153–191 (ESLF…EEQT). Ser198 is modified (phosphoserine). An HEAT 3 repeat occupies 201–239 (EENFEATRTLVASIQNDPSAEVRRAAMLNLINDNNTRPY). Residues 500–536 (EEKIKSKKINRRNETSVDEEDENGTHNDEVNEDEEDD) form a disordered region. 2 HEAT repeats span residues 597 to 635 (ILIA…LDVK) and 827 to 864 (VQLT…SSEQ). Residues 909-919 (ERSETQTKDEN) are compositionally biased toward basic and acidic residues. Disordered regions lie at residues 909 to 934 (ERSE…GNSF) and 959 to 995 (TTVN…LENM). 2 stretches are compositionally biased toward polar residues: residues 920-934 (NTAN…GNSF) and 959-973 (TTVN…TEQS). Ser933 is subject to Phosphoserine. Ser981 bears the Phosphoserine mark. Residues 986–995 (IDTSKNLENM) show a composition bias toward polar residues. Phosphoserine is present on Ser1008. Residues 1012-1035 (PDEKSDAMSIDEEDKDSESFSEVC) are disordered.

Belongs to the CND3 (condensin subunit 3) family. In terms of assembly, component of the condensin complex, which contains the SMC2 and SMC4 heterodimer, and three non SMC subunits that probably regulate the complex: BRN1, YCS4 and YCG1/YCS5.

The protein localises to the nucleus. The protein resides in the cytoplasm. It is found in the chromosome. Its function is as follows. Regulatory subunit of the condensin complex, a complex required for conversion of interphase chromatin into mitotic-like condense chromosomes. The condensin complex probably introduces positive supercoils into relaxed DNA in the presence of type I topoisomerases and converts nicked DNA into positive knotted forms in the presence of type II topoisomerases. The condensin complex probably also plays a role during interphase. In Saccharomyces cerevisiae (strain ATCC 204508 / S288c) (Baker's yeast), this protein is Condensin complex subunit 3 (YCG1).